The primary structure comprises 1025 residues: MAGVLSRDAPDIESILALNPRIQAHATLRSTMAKKLDKKHWKRNTDKNCFICEKLENNFDDIKHTTLGERGALREAVRCLKCADAPCQKSCPTSLDIKSFITSIANKNYYGAAKLIFSDNPLGLTCGMVCPTSDLCVGGCNLHATEEGPINIGGLQQFATEVFKAMNIPQIRSPLLPPPEHMPEAYSAKIALFGAGPASISCASFLARLGYSDITIFEKQEYVGGLSTSEIPQFRLPYDVVNFEIELMKDLGVKIICGKSISTDEMTLSTLKENGYKAAFIGIGLPEPKKDHIFQGLTQVQGFYTSKDFLPLVAKGSKPGMCACHSPLPSVRGAVIVLGAGDTAFDCATSALRCGARRVFIVFRKGFANIRAVPEEMELAKEEKCEFLPFLSPRKVIVKDGKIVGMQFVRTEQDETGNWVEDEEQIVRLKADVVISPFGSVLDDPKVIEALSPIKFNRWGLPEVNPETMQTSEPWVFAGGDVVGMANTTVESVNDGKQASWYIHEYIQAQYGALVPSQPTLPLFYTPVDLVDISVEMAGLRFPNPFGLASATPATSTPMIRRAFEAGWGFALTKTFSLDKDIVTNVSPRIIRGTTSGPLYGPGQSSFLNIELISEKTAAYWCHSVTELKADFPDNILIASIMCSYNKNDWMELSKMAEASGADALELNLSCPHGMGERGMGLACGQDPELVRNICRWVRQSVRVPFFAKLTPNVTDIVSIARAAKEGGADGVTATNTVSGLMGLKADGSPWPSVGSGKRTTYGGVSGTTIRPIALRAVTAIARALPGFPILATGGIDSAESGLQFLHSGASVLQVCSAIQNQDFTVIEDYCTGLKALLYLKSIEELSDWDGQSPPTMSHQKGKPVPHIAELMGQKLPSFGPYLERRKKILAASKIRENDQNRACSPLQRKHFNSQKPIPAIKDVIGKSLQYLGTFGELNIMEQVVALIDEEMCINCGKCYMTCNDSGYQAIQFDPETHLPTVSDTCTGCTLCLSVCPIMDCIRMVSRATPYEPKRGLPLAVKPVC.

Residues 69 to 100 enclose the 4Fe-4S ferredoxin-type 1 domain; sequence ERGALREAVRCLKCADAPCQKSCPTSLDIKSF. The [4Fe-4S] cluster site is built by Cys79, Cys82, Cys87, and Cys91. Position 129 (Val129) interacts with FAD. [4Fe-4S] cluster is bound by residues Cys130, Cys136, Cys140, and Gln156. Residues 194–198, 218–226, and Arg235 each bind FAD; these read GAGPA and EKQEYVGGL. NADP(+) is bound by residues 340–343, 364–365, and Arg371; these read AGDT and RK. The residue at position 384 (Lys384) is an N6-acetyllysine. Residues 437–439 and 481–487 contribute to the NADP(+) site; these read PFG and DVVGMAN. 480–489 provides a ligand contact to FAD; it reads GDVVGMANTT. Residues Ser550 and 574 to 575 each bind FMN; that span reads KT. Residues Asn609 and 668-670 contribute to the substrate site; that span reads NLS. Cys671 functions as the Proton acceptor in the catalytic mechanism. Residue Lys709 coordinates FMN. 736–737 contributes to the substrate binding site; the sequence is NT. Residues Gly767, 793-795, and 816-817 each bind FMN; these read TGG and CS. Ser905 bears the Phosphoserine mark. 4Fe-4S ferredoxin-type domains lie at 944-976 and 978-1007; these read VVALIDEEMCINCGKCYMTCNDSGYQAIQFDPE and HLPTVSDTCTGCTLCLSVCPIMDCIRMVSR. The [4Fe-4S] cluster site is built by Cys953, Cys956, Cys959, Cys963, Cys986, Cys989, Cys992, and Cys996.

This sequence belongs to the dihydropyrimidine dehydrogenase family. In terms of assembly, homodimer. FAD serves as cofactor. It depends on FMN as a cofactor. Requires [4Fe-4S] cluster as cofactor.

It localises to the cytoplasm. The enzyme catalyses 5,6-dihydrouracil + NADP(+) = uracil + NADPH + H(+). It carries out the reaction 5,6-dihydrothymine + NADP(+) = thymine + NADPH + H(+). It participates in amino-acid biosynthesis; beta-alanine biosynthesis. Inactivated by 5-iodouracil. In terms of biological role, involved in pyrimidine base degradation. Catalyzes the reduction of uracil and thymine. Also involved the degradation of the chemotherapeutic drug 5-fluorouracil. This chain is Dihydropyrimidine dehydrogenase [NADP(+)], found in Rattus norvegicus (Rat).